The sequence spans 1649 residues: DNA-directed RNA polymerase subunit beta' (1649 aa).

Zn(2+) is bound by residues Cys63, Cys65, Cys78, and Cys81. Mg(2+)-binding residues include Asp747, Asp749, and Asp751. Zn(2+) contacts are provided by Cys1078, Cys1269, Cys1276, and Cys1279.

It belongs to the RNA polymerase beta' chain family. In terms of assembly, the RNAP catalytic core consists of 2 alpha, 1 beta, 1 beta' and 1 omega subunit. When a sigma factor is associated with the core the holoenzyme is formed, which can initiate transcription. Mg(2+) is required as a cofactor. Zn(2+) serves as cofactor.

It carries out the reaction RNA(n) + a ribonucleoside 5'-triphosphate = RNA(n+1) + diphosphate. DNA-dependent RNA polymerase catalyzes the transcription of DNA into RNA using the four ribonucleoside triphosphates as substrates. This is DNA-directed RNA polymerase subunit beta' from Thermosipho melanesiensis (strain DSM 12029 / CIP 104789 / BI429).